The chain runs to 85 residues: Sec-independent protein translocase protein TatA (85 aa).

The helical transmembrane segment at 1-21 (MGSMSIWHWLVVGVLVLLLFG) threads the bilayer. The segment at 39–85 (FKKGMSEEDEPTQPAEPRPTPRLQQQPPIEPNADPKLQPMQDDRPQH) is disordered.

The protein belongs to the TatA/E family. As to quaternary structure, the Tat system comprises two distinct complexes: a TatABC complex, containing multiple copies of TatA, TatB and TatC subunits, and a separate TatA complex, containing only TatA subunits. Substrates initially bind to the TatABC complex, which probably triggers association of the separate TatA complex to form the active translocon.

It is found in the cell inner membrane. In terms of biological role, part of the twin-arginine translocation (Tat) system that transports large folded proteins containing a characteristic twin-arginine motif in their signal peptide across membranes. TatA could form the protein-conducting channel of the Tat system. The polypeptide is Sec-independent protein translocase protein TatA (Rhizorhabdus wittichii (strain DSM 6014 / CCUG 31198 / JCM 15750 / NBRC 105917 / EY 4224 / RW1) (Sphingomonas wittichii)).